The primary structure comprises 305 residues: Peroxidase A2 (305 aa).

A Pyrrolidone carboxylic acid modification is found at Gln1. N-linked (GlcNAc...) asparagine glycans are attached at residues Asn3 and Asn13. Cystine bridges form between Cys11-Cys91, Cys44-Cys49, Cys97-Cys299, and Cys176-Cys208. His42 serves as the catalytic Proton acceptor. Residues Asp43, Val46, Gly48, Asp50, and Ser52 each coordinate Ca(2+). Pro139 provides a ligand contact to substrate. The N-linked (GlcNAc...) asparagine glycan is linked to Asn147. His169 contacts heme b. Thr170 provides a ligand contact to Ca(2+). N-linked (GlcNAc...) asparagine glycosylation is found at Asn185, Asn197, and Asn211. Asp221, Thr224, and Asp229 together coordinate Ca(2+). An N-linked (GlcNAc...) asparagine glycan is attached at Asn267.

Belongs to the peroxidase family. Classical plant (class III) peroxidase subfamily. Requires Ca(2+) as cofactor. Heme b serves as cofactor.

The catalysed reaction is 2 a phenolic donor + H2O2 = 2 a phenolic radical donor + 2 H2O. Functionally, removal of H(2)O(2), oxidation of toxic reductants, biosynthesis and degradation of lignin, suberization, auxin catabolism, response to environmental stresses such as wounding, pathogen attack and oxidative stress. These functions might be dependent on each isozyme/isoform in each plant tissue. The polypeptide is Peroxidase A2 (HRPA2) (Armoracia rusticana (Horseradish)).